The chain runs to 64 residues: Large ribosomal subunit protein bL32 (64 aa).

A disordered region spans residues methionine 1 to valine 36.

This sequence belongs to the bacterial ribosomal protein bL32 family.

The protein is Large ribosomal subunit protein bL32 of Stenotrophomonas maltophilia (strain K279a).